We begin with the raw amino-acid sequence, 543 residues long: CTP synthase (543 aa).

The segment at 1-265 is amidoligase domain; sequence MTNYIFVTGG…DELVVQRFGL (265 aa). A CTP-binding site is contributed by Ser-13. Ser-13 contacts UTP. ATP is bound by residues 14 to 19 and Asp-71; that span reads SLGKGI. 2 residues coordinate Mg(2+): Asp-71 and Glu-139. CTP is bound by residues 146–148, 186–191, and Lys-222; these read DIE and KTKPTQ. UTP contacts are provided by residues 186–191 and Lys-222; that span reads KTKPTQ. 238–240 provides a ligand contact to ATP; it reads KDA. A Glutamine amidotransferase type-1 domain is found at 290–541; sequence TIGMVGKYVE…VKAAGEYYKN (252 aa). Position 351 (Gly-351) interacts with L-glutamine. The active-site Nucleophile; for glutamine hydrolysis is Cys-378. L-glutamine is bound by residues 379-382, Glu-402, and Arg-469; that span reads LGMQ. Residues His-514 and Glu-516 contribute to the active site.

The protein belongs to the CTP synthase family. In terms of assembly, homotetramer.

It carries out the reaction UTP + L-glutamine + ATP + H2O = CTP + L-glutamate + ADP + phosphate + 2 H(+). It catalyses the reaction L-glutamine + H2O = L-glutamate + NH4(+). The enzyme catalyses UTP + NH4(+) + ATP = CTP + ADP + phosphate + 2 H(+). It participates in pyrimidine metabolism; CTP biosynthesis via de novo pathway; CTP from UDP: step 2/2. Allosterically activated by GTP, when glutamine is the substrate; GTP has no effect on the reaction when ammonia is the substrate. The allosteric effector GTP functions by stabilizing the protein conformation that binds the tetrahedral intermediate(s) formed during glutamine hydrolysis. Inhibited by the product CTP, via allosteric rather than competitive inhibition. Its function is as follows. Catalyzes the ATP-dependent amination of UTP to CTP with either L-glutamine or ammonia as the source of nitrogen. Regulates intracellular CTP levels through interactions with the four ribonucleotide triphosphates. This Pseudoalteromonas atlantica (strain T6c / ATCC BAA-1087) protein is CTP synthase.